We begin with the raw amino-acid sequence, 737 residues long: MGETTAFVLLLVATLTRSSEIPADDTVGLLTEPQVAMFCGKLNMHINVQNGKWESDPSGTKSCLNTKEGILQYCQEVYPELQITNVVEANQPVSIQNWCKKGRKQCRSHTHIVVPYRCLVGEFVSDALLVPDKCKFLHQERMNQCESHLHWHTVAKESCGDRSMNLHDYGMLLPCGIDRFRGVKFVCCPAETEQETDSSEVEGEESDVWWGGADPEYSENSPPTPSRATYVAGDAFERDENGDGDEDEEDDEDVDPTDEQESDERTANVAMTTTTTTTTESVEEVVRAVCWAQAESGPCRAMLERWYFNPKKRRCVPFLFGGCGGNRNNFESEEYCLAVCSSSLPTVAPSPPDAVDQYFEAPGDDNEHADFRKAKESLEAKHRERMSQVMREWEEAERQAKNLPRADKKAVIQHFQEKVEALEQEAAGERQQLVETHMARVEALLNSRRRLTLENYLGALQANPPRARQVLSLLKKYVRAEQKDRQHTLKHYEHVRTVDPKKAAQIRPQVLTHLRVIDERMNQSLALLYKVPSVASEIQNQIYPAAGSDCKDPVEHCVCPQVDGLVSYGNDALMPDQAYSSAPMDMGVDGLGSIDQSFNQANTENHVEPVDARPIPDRGLPTRPVSSLKLEEMPEVRTETDKRQSAGYEVYHQKLVFFADDVGSNKGAIIGLMVGGVVIATVIVITLVMLRKKQYTSIHHGVIEVDAAVTPEERHLARMQQNGYENPTYKFFEQMQN.

A signal peptide spans 1–18 (MGETTAFVLLLVATLTRS). The Extracellular portion of the chain corresponds to 19–668 (SEIPADDTVG…ADDVGSNKGA (650 aa)). A GFLD subdomain region spans residues 29-124 (LLTEPQVAMF…PYRCLVGEFV (96 aa)). The region spanning 29–190 (LLTEPQVAMF…RGVKFVCCPA (162 aa)) is the E1 domain. 6 disulfide bridges follow: Cys-39–Cys-63, Cys-74–Cys-118, Cys-99–Cys-106, Cys-134–Cys-188, Cys-145–Cys-175, and Cys-159–Cys-187. A cuBD subdomain region spans residues 132–190 (DKCKFLHQERMNQCESHLHWHTVAKESCGDRSMNLHDYGMLLPCGIDRFRGVKFVCCPA). His-148, His-152, and Tyr-169 together coordinate Cu cation. 2 stretches are compositionally biased toward acidic residues: residues 193-207 (EQETDSSEVEGEESD) and 242-262 (GDGDEDEEDDEDVDPTDEQES). The tract at residues 193 to 280 (EQETDSSEVE…MTTTTTTTTE (88 aa)) is disordered. In terms of domain architecture, BPTI/Kunitz inhibitor spans 286 to 344 (VRAVCWAQAESGPCRAMLERWYFNPKKRRCVPFLFGGCGGNRNNFESEEYCLAVCSSSL). 3 cysteine pairs are disulfide-bonded: Cys-290-Cys-340, Cys-299-Cys-323, and Cys-315-Cys-336. An E2 domain is found at 354 to 545 (AVDQYFEAPG…SEIQNQIYPA (192 aa)). The N-linked (GlcNAc...) asparagine glycan is linked to Asn-522. A helical membrane pass occupies residues 669–689 (IIGLMVGGVVIATVIVITLVM). Over 690-737 (LRKKQYTSIHHGVIEVDAAVTPEERHLARMQQNGYENPTYKFFEQMQN) the chain is Cytoplasmic. The YENPXY motif motif lies at 724-729 (YENPTY). Residues 726-729 (NPTY) are clathrin-binding.

This sequence belongs to the APP family.

The protein resides in the membrane. Functionally, functional neuronal receptor which couples to intracellular signaling pathway through the GTP-binding protein G(O). This Takifugu rubripes (Japanese pufferfish) protein is Amyloid-beta A4 protein (app).